Consider the following 105-residue polypeptide: uncharacterized protein (105 aa).

A helical membrane pass occupies residues 25–47 (AHSVTLLFGIFRSSPFLLLFLLI). The segment at 54-89 (GRGSQRMKKKRGRANPSENLRERADPTNGPAENGKK) is disordered.

The protein localises to the membrane. This is an uncharacterized protein from Saccharomyces cerevisiae (strain ATCC 204508 / S288c) (Baker's yeast).